The primary structure comprises 313 residues: Methionyl-tRNA formyltransferase (313 aa).

A (6S)-5,6,7,8-tetrahydrofolate-binding site is contributed by 113–116 (SLLP).

Belongs to the Fmt family.

It catalyses the reaction L-methionyl-tRNA(fMet) + (6R)-10-formyltetrahydrofolate = N-formyl-L-methionyl-tRNA(fMet) + (6S)-5,6,7,8-tetrahydrofolate + H(+). In terms of biological role, attaches a formyl group to the free amino group of methionyl-tRNA(fMet). The formyl group appears to play a dual role in the initiator identity of N-formylmethionyl-tRNA by promoting its recognition by IF2 and preventing the misappropriation of this tRNA by the elongation apparatus. The sequence is that of Methionyl-tRNA formyltransferase from Francisella tularensis subsp. mediasiatica (strain FSC147).